A 498-amino-acid chain; its full sequence is Glycerol kinase (498 aa).

Threonine 12 contributes to the ADP binding site. Residues threonine 12, threonine 13, and serine 14 each contribute to the ATP site. Threonine 12 serves as a coordination point for sn-glycerol 3-phosphate. Arginine 16 contacts ADP. Positions 82, 83, 134, and 243 each coordinate sn-glycerol 3-phosphate. Positions 82, 83, 134, 243, and 244 each coordinate glycerol. ADP contacts are provided by threonine 265 and glycine 308. ATP-binding residues include threonine 265, glycine 308, glutamine 312, and glycine 411. Glycine 411 provides a ligand contact to ADP.

It belongs to the FGGY kinase family.

It catalyses the reaction glycerol + ATP = sn-glycerol 3-phosphate + ADP + H(+). The protein operates within polyol metabolism; glycerol degradation via glycerol kinase pathway; sn-glycerol 3-phosphate from glycerol: step 1/1. Its activity is regulated as follows. Inhibited by fructose 1,6-bisphosphate (FBP). Its function is as follows. Key enzyme in the regulation of glycerol uptake and metabolism. Catalyzes the phosphorylation of glycerol to yield sn-glycerol 3-phosphate. In Brucella canis (strain ATCC 23365 / NCTC 10854 / RM-666), this protein is Glycerol kinase.